Consider the following 387-residue polypeptide: S-adenosylmethionine synthase (387 aa).

Histidine 15 provides a ligand contact to ATP. Aspartate 17 contributes to the Mg(2+) binding site. Glutamate 43 is a binding site for K(+). Glutamate 56 and glutamine 99 together coordinate L-methionine. A flexible loop region spans residues 99-109 (QSPDIAQGVNA). ATP-binding positions include 166-168 (DAK), 232-233 (RF), aspartate 241, 247-248 (RK), alanine 264, and lysine 268. Aspartate 241 contacts L-methionine. Lysine 272 serves as a coordination point for L-methionine.

This sequence belongs to the AdoMet synthase family. As to quaternary structure, homotetramer; dimer of dimers. Mg(2+) serves as cofactor. K(+) is required as a cofactor.

It is found in the cytoplasm. The catalysed reaction is L-methionine + ATP + H2O = S-adenosyl-L-methionine + phosphate + diphosphate. Its pathway is amino-acid biosynthesis; S-adenosyl-L-methionine biosynthesis; S-adenosyl-L-methionine from L-methionine: step 1/1. In terms of biological role, catalyzes the formation of S-adenosylmethionine (AdoMet) from methionine and ATP. The overall synthetic reaction is composed of two sequential steps, AdoMet formation and the subsequent tripolyphosphate hydrolysis which occurs prior to release of AdoMet from the enzyme. The sequence is that of S-adenosylmethionine synthase from Dechloromonas aromatica (strain RCB).